A 322-amino-acid chain; its full sequence is Corticotropin-releasing factor-binding protein (322 aa).

The first 24 residues, 1-24, serve as a signal peptide directing secretion; the sequence is MSPNFKLQCHFILILLTALRGESR. Disulfide bonds link C60-C81, C104-C141, C183-C205, C237-C264, and C277-C318. N204 is a glycosylation site (N-linked (GlcNAc...) asparagine).

Belongs to the CRF-binding protein family.

The protein localises to the secreted. In terms of biological role, binds CRF and inactivates it. May prevent inappropriate pituitary-adrenal stimulation in pregnancy. In Mus musculus (Mouse), this protein is Corticotropin-releasing factor-binding protein (Crhbp).